Reading from the N-terminus, the 142-residue chain is Large ribosomal subunit protein uL13 (142 aa).

Belongs to the universal ribosomal protein uL13 family. In terms of assembly, part of the 50S ribosomal subunit.

In terms of biological role, this protein is one of the early assembly proteins of the 50S ribosomal subunit, although it is not seen to bind rRNA by itself. It is important during the early stages of 50S assembly. This chain is Large ribosomal subunit protein uL13, found in Chromohalobacter salexigens (strain ATCC BAA-138 / DSM 3043 / CIP 106854 / NCIMB 13768 / 1H11).